The sequence spans 252 residues: Protein AGAMOUS-LIKE 6 (252 aa).

Residues 1 to 61 (MGRGRVELKR…GKLYEFGSAG (61 aa)) enclose the MADS-box domain. 2 consecutive short sequence motifs (nuclear localization signal) follow at residues 8-15 (LKRIENKI) and 138-145 (QRKTQIMM). Positions 85–175 (TQSWYQEVSK…KIKVSLELSS (91 aa)) constitute a K-box domain.

As to expression, restricted to flowers.

It localises to the nucleus. Probable transcription factor involved in fruit development. Key regulator of the transition between the state of 'ovary arrest' imposed towards anthesis and the fertilization-triggered fruit set. In Solanum lycopersicum (Tomato), this protein is Protein AGAMOUS-LIKE 6.